A 416-amino-acid chain; its full sequence is Phosphoribosylamine--glycine ligase (416 aa).

The region spanning 105 to 310 (KSFLKKYRIK…PLELILAATQ (206 aa)) is the ATP-grasp domain. 131 to 192 (IYSLTPPIVV…EEFLDGYELS (62 aa)) lines the ATP pocket. Mg(2+) contacts are provided by E281 and N283.

It belongs to the GARS family. Requires Mg(2+) as cofactor. It depends on Mn(2+) as a cofactor.

The catalysed reaction is 5-phospho-beta-D-ribosylamine + glycine + ATP = N(1)-(5-phospho-beta-D-ribosyl)glycinamide + ADP + phosphate + H(+). It participates in purine metabolism; IMP biosynthesis via de novo pathway; N(1)-(5-phospho-D-ribosyl)glycinamide from 5-phospho-alpha-D-ribose 1-diphosphate: step 2/2. The protein is Phosphoribosylamine--glycine ligase of Campylobacter jejuni subsp. jejuni serotype O:2 (strain ATCC 700819 / NCTC 11168).